The primary structure comprises 268 residues: MATLELRNTSSVTPPVQLRNVVRQFGPQRVIDGLDLDIAAGEFVALLGASGSGKTTLLRTLAGLDDIDSGELRVPVARAAVFQEPRLMPWKSAWKNVVLGLRINDAKARAEAALTEVGLAHRLNAFPATLSGGEAQRVALARGLVREPKLLLLDEPFAALDALTRIRMHQLIIDLWRKHTPAVLLVTHDVDEAILLADRVIVLADGKLADDIRVDLPRQRDSGQAGFQSIRSRLLGLLGVKTQAADTATQEPARDVTLSALRRFANAR.

Residues 16–230 (VQLRNVVRQF…DSGQAGFQSI (215 aa)) enclose the ABC transporter domain. 48 to 55 (GASGSGKT) serves as a coordination point for ATP.

This sequence belongs to the ABC transporter superfamily. Aliphatic sulfonates importer (TC 3.A.1.17.2) family. As to quaternary structure, the complex is composed of two ATP-binding proteins (SsuB), two transmembrane proteins (SsuC) and a solute-binding protein (SsuA).

The protein localises to the cell inner membrane. The enzyme catalyses ATP + H2O + aliphatic sulfonate-[sulfonate-binding protein]Side 1 = ADP + phosphate + aliphatic sulfonateSide 2 + [sulfonate-binding protein]Side 1.. In terms of biological role, part of the ABC transporter complex SsuABC involved in aliphatic sulfonates import. Responsible for energy coupling to the transport system. The chain is Aliphatic sulfonates import ATP-binding protein SsuB 2 from Pseudomonas savastanoi pv. phaseolicola (strain 1448A / Race 6) (Pseudomonas syringae pv. phaseolicola (strain 1448A / Race 6)).